A 155-amino-acid chain; its full sequence is Late embryogenesis abundant protein 2 (155 aa).

Positions 1–155 (MTSHDQSYRA…DKDHFPTNRH (155 aa)) are disordered. 2 stretches are compositionally biased toward basic and acidic residues: residues 11-21 (GEAKGRTEEKT) and 28-39 (IEDKAQAAKEKA). Over residues 40–78 (QQAAQTAKDKTSQTAQAAKEKTQQTAQAAKDKTQQTTQA) the composition is skewed to low complexity. 2 consecutive repeat copies span residues 53–63 (TAQAAKEKTQQ) and 64–74 (TAQAAKDKTQQ). The segment at 53–74 (TAQAAKEKTQQTAQAAKDKTQQ) is 2 X 11 AA approximate tandem repeats of T-A-Q-A-A-K-E-K-T-Q-Q. A compositionally biased stretch (basic and acidic residues) spans 79-95 (TKEKAQDTTGRAKEKGS). The segment covering 97-120 (MGQSTKETAQSGKDNSAGFLQQTG) has biased composition (polar residues). Over residues 144 to 155 (DQDKDHFPTNRH) the composition is skewed to basic and acidic residues.

Belongs to the LEA type 4 family. In terms of tissue distribution, highest expression is found in seeds. No expression detected in adult tissues.

This Cicer arietinum (Chickpea) protein is Late embryogenesis abundant protein 2.